The primary structure comprises 291 residues: ATP synthase gamma chain (291 aa).

It belongs to the ATPase gamma chain family. As to quaternary structure, F-type ATPases have 2 components, CF(1) - the catalytic core - and CF(0) - the membrane proton channel. CF(1) has five subunits: alpha(3), beta(3), gamma(1), delta(1), epsilon(1). CF(0) has three main subunits: a, b and c.

It localises to the cell inner membrane. Functionally, produces ATP from ADP in the presence of a proton gradient across the membrane. The gamma chain is believed to be important in regulating ATPase activity and the flow of protons through the CF(0) complex. The sequence is that of ATP synthase gamma chain from Aquifex aeolicus (strain VF5).